Reading from the N-terminus, the 245-residue chain is Uridylate kinase (245 aa).

12 to 15 (KISG) lines the ATP pocket. G55 lines the UMP pocket. ATP-binding residues include G56 and R60. UMP is bound by residues D76 and 137 to 144 (AGAPYLTT). 3 residues coordinate ATP: T164, Y171, and D174.

Belongs to the UMP kinase family. In terms of assembly, homohexamer.

It localises to the cytoplasm. The enzyme catalyses UMP + ATP = UDP + ADP. It participates in pyrimidine metabolism; CTP biosynthesis via de novo pathway; UDP from UMP (UMPK route): step 1/1. With respect to regulation, inhibited by UTP. Its function is as follows. Catalyzes the reversible phosphorylation of UMP to UDP. This chain is Uridylate kinase, found in Chlamydia trachomatis serovar A (strain ATCC VR-571B / DSM 19440 / HAR-13).